The sequence spans 311 residues: Burkholderia TALE-like protein 3 (311 aa).

A Cryptic repeat -1 repeat occupies 19–50; that stretch reads LSPFECLKIEKHSGGADALEFISNKYDALTQV. Residues 51–83 form a Cryptic repeat 0 repeat; it reads LSRADILKIACHDCAAHALQAVLDYEQVFRQRG. 6 Core repeat repeats span residues 84 to 116, 117 to 149, 150 to 182, 183 to 215, 216 to 248, and 249 to 281; these read FARADIIKITGNGGGAQALKAVVVHGPTLNECG, FSQADIVRIADNIGGAQALKAVLEHGPTLNERD, YSGADIVKIAGNGGGARALKAVVMHGPTLCESG, YSGADIVKIASNGGGAQALEAVAMHGSTLCERG, YCRTDIAKIAGNGGGAQALKAIVMHGPTLCERG, and YSRTDIVKIADNNGGAQALKAVFEHGPALTQAG. The stretch at 282–311 is one Cryptic repeat +1 repeat; the sequence is RSNEDIVNMAARTGAAGQIRKMAAQLSGRQ.

This sequence belongs to the transcription activator-like effector (TALE) family. Bat subfamily.

Does not bind DNA, probably because it has too few core repeats. In Mycetohabitans rhizoxinica (strain DSM 19002 / CIP 109453 / HKI 454) (Paraburkholderia rhizoxinica), this protein is Burkholderia TALE-like protein 3.